The chain runs to 121 residues: Large ribosomal subunit protein uL18 (121 aa).

Belongs to the universal ribosomal protein uL18 family. As to quaternary structure, part of the 50S ribosomal subunit; part of the 5S rRNA/L5/L18/L25 subcomplex. Contacts the 5S and 23S rRNAs.

Functionally, this is one of the proteins that bind and probably mediate the attachment of the 5S RNA into the large ribosomal subunit, where it forms part of the central protuberance. The chain is Large ribosomal subunit protein uL18 from Paraburkholderia phymatum (strain DSM 17167 / CIP 108236 / LMG 21445 / STM815) (Burkholderia phymatum).